We begin with the raw amino-acid sequence, 199 residues long: Recombination protein RecR (199 aa).

The C4-type zinc finger occupies 58-73 (CSTCNNLTDKDPCTIC). The region spanning 81–176 (NLICVVQDAR…RVTRLAYGLP (96 aa)) is the Toprim domain.

It belongs to the RecR family.

In terms of biological role, may play a role in DNA repair. It seems to be involved in an RecBC-independent recombinational process of DNA repair. It may act with RecF and RecO. In Natranaerobius thermophilus (strain ATCC BAA-1301 / DSM 18059 / JW/NM-WN-LF), this protein is Recombination protein RecR.